We begin with the raw amino-acid sequence, 431 residues long: Histidinol dehydrogenase 1 (431 aa).

Residues tyrosine 127, glutamine 188, and asparagine 211 each coordinate NAD(+). Positions 234, 256, and 259 each coordinate substrate. Positions 256 and 259 each coordinate Zn(2+). Active-site proton acceptor residues include glutamate 324 and histidine 325. Substrate contacts are provided by histidine 325, aspartate 358, glutamate 412, and histidine 417. Position 358 (aspartate 358) interacts with Zn(2+). Residue histidine 417 participates in Zn(2+) binding.

This sequence belongs to the histidinol dehydrogenase family. Zn(2+) serves as cofactor.

It catalyses the reaction L-histidinol + 2 NAD(+) + H2O = L-histidine + 2 NADH + 3 H(+). It functions in the pathway amino-acid biosynthesis; L-histidine biosynthesis; L-histidine from 5-phospho-alpha-D-ribose 1-diphosphate: step 9/9. Catalyzes the sequential NAD-dependent oxidations of L-histidinol to L-histidinaldehyde and then to L-histidine. The sequence is that of Histidinol dehydrogenase 1 from Trichormus variabilis (strain ATCC 29413 / PCC 7937) (Anabaena variabilis).